The chain runs to 157 residues: MIVSFRPTADLVDSIGVDVRSCDLQFRQFGGCSEFAGPISTVRCFQDNALLKSVLSQTSAGGVLVVDGAGSLHTALVGDVIAELAHSNGWAGLIVNGAVRDAAALRGIDIGIKALGTNPRKSTKIGTGERHVEVNLGGVTFVPGEVVYSDDDGIVVV.

Residues glycine 78–isoleucine 81 and arginine 100 contribute to the substrate site. Aspartate 101 contributes to the a divalent metal cation binding site.

The protein belongs to the class II aldolase/RraA-like family. In terms of assembly, homotrimer. A divalent metal cation is required as a cofactor.

It carries out the reaction 4-hydroxy-4-methyl-2-oxoglutarate = 2 pyruvate. It catalyses the reaction oxaloacetate + H(+) = pyruvate + CO2. In terms of biological role, catalyzes the aldol cleavage of 4-hydroxy-4-methyl-2-oxoglutarate (HMG) into 2 molecules of pyruvate. Also contains a secondary oxaloacetate (OAA) decarboxylase activity due to the common pyruvate enolate transition state formed following C-C bond cleavage in the retro-aldol and decarboxylation reactions. In Mycobacterium leprae (strain Br4923), this protein is Putative 4-hydroxy-4-methyl-2-oxoglutarate aldolase.